A 430-amino-acid polypeptide reads, in one-letter code: Adenylosuccinate synthetase (430 aa).

Residues 13–19 (GDEGKGK) and 41–43 (GHT) each bind GTP. Asp-14 serves as the catalytic Proton acceptor. Positions 14 and 41 each coordinate Mg(2+). IMP-binding positions include 14–17 (DEGK), 39–42 (NAGH), Thr-130, Arg-144, Gln-225, Thr-240, and Arg-304. The Proton donor role is filled by His-42. 300–306 (STTGRAR) serves as a coordination point for substrate. GTP contacts are provided by residues Arg-306, 332–334 (KLD), and 414–416 (STG).

It belongs to the adenylosuccinate synthetase family. In terms of assembly, homodimer. Mg(2+) serves as cofactor.

It is found in the cytoplasm. It carries out the reaction IMP + L-aspartate + GTP = N(6)-(1,2-dicarboxyethyl)-AMP + GDP + phosphate + 2 H(+). Its pathway is purine metabolism; AMP biosynthesis via de novo pathway; AMP from IMP: step 1/2. Plays an important role in the de novo pathway of purine nucleotide biosynthesis. Catalyzes the first committed step in the biosynthesis of AMP from IMP. The protein is Adenylosuccinate synthetase of Azotobacter vinelandii (strain DJ / ATCC BAA-1303).